We begin with the raw amino-acid sequence, 400 residues long: uncharacterized protein (400 aa).

Residues 1-23 form the signal peptide; the sequence is MSRKLLLALTFLVVLGIAVVVMA.

This is an uncharacterized protein from Archaeoglobus fulgidus (strain ATCC 49558 / DSM 4304 / JCM 9628 / NBRC 100126 / VC-16).